A 1001-amino-acid polypeptide reads, in one-letter code: Serine/threonine-protein kinase TAO1-B (1001 aa).

Positions 28-281 (FSDLREIGHG…SDELLKHMFV (254 aa)) constitute a Protein kinase domain. ATP contacts are provided by residues 34 to 42 (IGHGSFGAV) and lysine 57. Aspartate 151 (proton acceptor) is an active-site residue. 2 disordered regions span residues 324–435 (PAVE…YRNR) and 567–586 (KEEL…EWLS). A compositionally biased stretch (low complexity) spans 350–370 (SNQSIPSMSISASSQSSSVNS). Composition is skewed to basic and acidic residues over residues 375-388 (SDDK…EGDH) and 577-586 (PKKEKQEWLS). Coiled-coil stretches lie at residues 458–651 (SELR…EHAM) and 754–877 (KAVL…EIEA). Positions 911 to 1001 (SHNPTGGPGP…ISNGSHMSYT (91 aa)) are disordered. The span at 921 to 930 (HWGHPMAGPP) shows a compositional bias: low complexity. Polar residues-rich tracts occupy residues 949–967 (GSVQ…NSPQ) and 975–1001 (GGRT…MSYT).

Belongs to the protein kinase superfamily. STE Ser/Thr protein kinase family. STE20 subfamily.

The protein resides in the cytoplasm. It catalyses the reaction L-seryl-[protein] + ATP = O-phospho-L-seryl-[protein] + ADP + H(+). The catalysed reaction is L-threonyl-[protein] + ATP = O-phospho-L-threonyl-[protein] + ADP + H(+). Functionally, serine/threonine-protein kinase involved in various processes such as p38/mapk14 stress-activated MAPK cascade, DNA damage response and regulation of cytoskeleton stability. Acts as an activator of the p38/MAPK14 stress-activated MAPK cascade by mediating phosphorylation and subsequent activation of upstream MAP kinase kinases. In response to DNA damage, involved in the G2/M transition DNA damage checkpoint by activating the p38/MAPK14 stress-activated MAPK cascade. This is Serine/threonine-protein kinase TAO1-B (taok1-b) from Xenopus laevis (African clawed frog).